A 1029-amino-acid chain; its full sequence is Eukaryotic translation initiation factor 3 subunit A (1029 aa).

The stretch at 92–121 (LKKFIELAEQKVTEAQAKADEIQSSLESAA) forms a coiled coil. The 185-residue stretch at 339-523 (MTKAASFVLL…GVLTFESDIF (185 aa)) folds into the PCI domain. Positions 606–903 (TRRAIIEKRK…EEEAEQRRAA (298 aa)) form a coiled coil. Basic and acidic residues-rich tracts occupy residues 621–632 (ALQKKQREEENR), 644–666 (EQQRLLDEHRERERKRMKDEQDR), 797–901 (TEKR…EQRR), and 913–924 (GPAREASPERTA). 2 disordered regions span residues 621–666 (ALQK…EQDR) and 797–1029 (TEKR…KQQQ). Over residues 943 to 960 (AKAAASAGEQPAAAQEAT) the composition is skewed to low complexity. Basic and acidic residues predominate over residues 977–993 (ATRDGPSDSRDLSHARE).

It belongs to the eIF-3 subunit A family. In terms of assembly, component of the eukaryotic translation initiation factor 3 (eIF-3) complex.

The protein localises to the cytoplasm. In terms of biological role, RNA-binding component of the eukaryotic translation initiation factor 3 (eIF-3) complex, which is involved in protein synthesis of a specialized repertoire of mRNAs and, together with other initiation factors, stimulates binding of mRNA and methionyl-tRNAi to the 40S ribosome. The eIF-3 complex specifically targets and initiates translation of a subset of mRNAs involved in cell proliferation. This chain is Eukaryotic translation initiation factor 3 subunit A, found in Coccidioides immitis (strain RS) (Valley fever fungus).